A 142-amino-acid chain; its full sequence is Large ribosomal subunit protein uL13 (142 aa).

The protein belongs to the universal ribosomal protein uL13 family. As to quaternary structure, part of the 50S ribosomal subunit.

In terms of biological role, this protein is one of the early assembly proteins of the 50S ribosomal subunit, although it is not seen to bind rRNA by itself. It is important during the early stages of 50S assembly. This is Large ribosomal subunit protein uL13 from Shewanella baltica (strain OS223).